The primary structure comprises 202 residues: Alpha-S1-casein (202 aa).

Disordered regions lie at residues 1-25 (RPKL…VLKE) and 51-84 (LKEK…VVPI). 2 stretches are compositionally biased toward basic and acidic residues: residues 16-25 (QDSREKVLKE) and 51-63 (LKEK…KEYL). S18 bears the Phosphoserine mark. Residues 70–80 (QESSSTSSSEE) are compositionally biased toward low complexity. A phosphoserine mark is found at S72, S73, S74, S76, S77, and S78.

This sequence belongs to the alpha-casein family. In terms of tissue distribution, mammary gland specific. Secreted in milk.

The protein resides in the secreted. Its function is as follows. Important role in the capacity of milk to transport calcium phosphate. The sequence is that of Alpha-S1-casein from Equus asinus (Donkey).